Reading from the N-terminus, the 379-residue chain is Cytochrome b (379 aa).

Helical transmembrane passes span 33 to 53 (FGSL…FLAM), 77 to 98 (WFLR…YLHI), 113 to 133 (WNVG…GYVL), and 178 to 198 (FFTF…IHLL). Positions 83 and 97 each coordinate heme b. Heme b-binding residues include His182 and His196. An a ubiquinone-binding site is contributed by His201. A run of 4 helical transmembrane segments spans residues 226–246 (YKDL…TLFS), 288–308 (LGGV…PITH), 320–340 (LTQI…WIGG), and 347–367 (FIII…VFAP).

This sequence belongs to the cytochrome b family. As to quaternary structure, the cytochrome bc1 complex contains 3 respiratory subunits (MT-CYB, CYC1 and UQCRFS1), 2 core proteins (UQCRC1 and UQCRC2) and probably 6 low-molecular weight proteins. Heme b serves as cofactor.

Its subcellular location is the mitochondrion inner membrane. In terms of biological role, component of the ubiquinol-cytochrome c reductase complex (complex III or cytochrome b-c1 complex) that is part of the mitochondrial respiratory chain. The b-c1 complex mediates electron transfer from ubiquinol to cytochrome c. Contributes to the generation of a proton gradient across the mitochondrial membrane that is then used for ATP synthesis. This chain is Cytochrome b (mt-cyb), found in Amia calva (Bowfin).